A 286-amino-acid polypeptide reads, in one-letter code: Ribonuclease H1 (286 aa).

Basic and acidic residues predominate over residues 101–115; that stretch reads EPLDGDGHESAEPYA. The disordered stretch occupies residues 101 to 127; it reads EPLDGDGHESAEPYAKHMKPSVEPAPP. The RNase H type-1 domain occupies 136–282; it reads MGDFVVVYTD…ADRLAREGAK (147 aa). Residues aspartate 145, glutamate 186, aspartate 210, and aspartate 274 each contribute to the Mg(2+) site.

This sequence belongs to the RNase H family. Monomer. The cofactor is Mg(2+). As to expression, ubiquitous.

It is found in the cytoplasm. It catalyses the reaction Endonucleolytic cleavage to 5'-phosphomonoester.. With respect to regulation, in the presence of magnesium, manganese is inhibitory. Endonuclease that specifically degrades the RNA of RNA-DNA hybrids. Plays a role in RNA polymerase II (RNAp II) transcription termination by degrading R-loop RNA-DNA hybrid formation at G-rich pause sites located downstream of the poly(A) site and behind the elongating RNAp II. In Homo sapiens (Human), this protein is Ribonuclease H1 (RNASEH1).